We begin with the raw amino-acid sequence, 78 residues long: UPF0270 protein YPTB3725 (78 aa).

The protein belongs to the UPF0270 family.

The chain is UPF0270 protein YPTB3725 from Yersinia pseudotuberculosis serotype I (strain IP32953).